The following is a 328-amino-acid chain: Aspartate carbamoyltransferase catalytic subunit (328 aa).

Residues R70 and T71 each contribute to the carbamoyl phosphate site. Residue K98 participates in L-aspartate binding. Residues R120, H150, and Q153 each contribute to the carbamoyl phosphate site. Residues R183 and R238 each contribute to the L-aspartate site. Residues G279 and P280 each contribute to the carbamoyl phosphate site.

This sequence belongs to the aspartate/ornithine carbamoyltransferase superfamily. ATCase family. Heterododecamer (2C3:3R2) of six catalytic PyrB chains organized as two trimers (C3), and six regulatory PyrI chains organized as three dimers (R2).

It carries out the reaction carbamoyl phosphate + L-aspartate = N-carbamoyl-L-aspartate + phosphate + H(+). It participates in pyrimidine metabolism; UMP biosynthesis via de novo pathway; (S)-dihydroorotate from bicarbonate: step 2/3. Functionally, catalyzes the condensation of carbamoyl phosphate and aspartate to form carbamoyl aspartate and inorganic phosphate, the committed step in the de novo pyrimidine nucleotide biosynthesis pathway. The chain is Aspartate carbamoyltransferase catalytic subunit from Methylococcus capsulatus (strain ATCC 33009 / NCIMB 11132 / Bath).